The following is a 368-amino-acid chain: Peptide chain release factor 2 (368 aa).

Residue Q250 is modified to N5-methylglutamine.

The protein belongs to the prokaryotic/mitochondrial release factor family. In terms of processing, methylated by PrmC. Methylation increases the termination efficiency of RF2.

The protein localises to the cytoplasm. Functionally, peptide chain release factor 2 directs the termination of translation in response to the peptide chain termination codons UGA and UAA. This chain is Peptide chain release factor 2, found in Mycolicibacterium smegmatis (strain ATCC 700084 / mc(2)155) (Mycobacterium smegmatis).